A 525-amino-acid polypeptide reads, in one-letter code: Nuclear polyadenylated RNA-binding protein NAB2 (525 aa).

Disordered regions lie at residues 102-160 (SDIA…QLQP) and 196-236 (QFAP…STRF). The span at 103-160 (DIAQQQQQQQQQQQPDIAQQQPQQQPQQQPQQQPQQQPQQQPQQQPQQQPQQQPQLQP) shows a compositional bias: low complexity. Repeat copies occupy residues 121–124 (QQQP), 125–128 (QQQP), 129–132 (QQQP), 133–136 (QQQP), 137–140 (QQQP), 141–144 (QQQP), 145–148 (QQQP), 149–152 (QQQP), and 153–156 (QQQP). Residues 121–156 (QQQPQQQPQQQPQQQPQQQPQQQPQQQPQQQPQQQP) are 10 X 4 AA tandem repeats of Q-Q-Q-P. A 10; approximate repeat occupies 157–160 (QLQP). 2 positions are modified to omega-N-methylarginine: Arg-209 and Arg-222. Residues 209–228 (RGGGAVGKNRRGGRGGNRGG) are RNA-binding RGG-box. Residues 209–239 (RGGGAVGKNRRGGRGGNRGGRNNNSTRFNPL) form a PY-NLS nuclear localization signal region. Thr-254 carries the post-translational modification Phosphothreonine. C3H1-type zinc fingers lie at residues 262–278 (CRLF…PHAH), 283–300 (CNEY…EFLH), 340–355 (CKFG…PFGH), 371–386 (CDKN…RKAH), 415–430 (CKFG…KYRH), 437–452 (CREG…LFGH), and 458–473 (CRFG…LFRH). The tract at residues 503–525 (NAIIENAPPQTSFTHQEQDTEMN) is disordered. Polar residues predominate over residues 510-525 (PPQTSFTHQEQDTEMN).

Belongs to the ZC3H14 family. As to quaternary structure, interacts with MLP1. Interacts with PUB1. Post-translationally, methylated by HMT1.

It localises to the nucleus. Its subcellular location is the cytoplasm. In terms of biological role, RNA-binding protein involved in RNA processing and transcription regulation. Acts as a regulator of mRNA stability: binds the poly(A) tail of mRNAs and pre-mRNAs, preventing their degradation by the exosome. Involved in the biogenesis of circular RNAs (circRNAs) which are produced by back-splicing circularization of pre-mRNAs. Involved in mRNA poly(A) tail length control and nuclear export. Functions in surveillance and the packaging leading to generation of export-competent mRNPs. Controls both mRNP compaction that facilitates movement through nuclear pore complexes and the length of transcript poly(A) tails. Also acts as a regulator of transcription. Associates directly with nascent RNA polymerase II transcripts and remains associated during subsequent nuclear RNA processing reactions. Required for RNA polymerase III (RNAPIII) transcription: required for the occupancy of RNAPIII and Transcription factor IIIB (TFIIIB) at target genes, possibly via direct association with nascent RNAPIII transcripts. The polypeptide is Nuclear polyadenylated RNA-binding protein NAB2 (Saccharomyces cerevisiae (strain ATCC 204508 / S288c) (Baker's yeast)).